A 517-amino-acid chain; its full sequence is Rop guanine nucleotide exchange factor 9 (517 aa).

2 disordered regions span residues 16–76 (NLDR…SETE) and 428–517 (GEET…KDRH). The span at 39–63 (MPESQTQDSLGGSPVETSRPMTSRL) shows a compositional bias: polar residues. In terms of domain architecture, PRONE spans 65–429 (SRRQDKQQSE…SLARKQCTGE (365 aa)). Residues 66 to 76 (RRQDKQQSETE) show a composition bias toward basic and acidic residues. Over residues 440-452 (ETDSASAGSSNYS) the composition is skewed to polar residues.

Interacts with ARAC11/ROP1 and ARAC10/ROP11. Interacts with PRK6. Expressed in pollen grains and pollen tubes.

The protein localises to the cell membrane. Its function is as follows. Guanine-nucleotide exchange factor (GEF) that acts as an activator of Rop (Rho of plants) GTPases by promoting the exchange of GDP for GTP. This Arabidopsis thaliana (Mouse-ear cress) protein is Rop guanine nucleotide exchange factor 9.